The sequence spans 432 residues: Gamma-glutamyl phosphate reductase (432 aa).

The protein belongs to the gamma-glutamyl phosphate reductase family.

It localises to the cytoplasm. The catalysed reaction is L-glutamate 5-semialdehyde + phosphate + NADP(+) = L-glutamyl 5-phosphate + NADPH + H(+). The protein operates within amino-acid biosynthesis; L-proline biosynthesis; L-glutamate 5-semialdehyde from L-glutamate: step 2/2. In terms of biological role, catalyzes the NADPH-dependent reduction of L-glutamate 5-phosphate into L-glutamate 5-semialdehyde and phosphate. The product spontaneously undergoes cyclization to form 1-pyrroline-5-carboxylate. The chain is Gamma-glutamyl phosphate reductase from Corynebacterium glutamicum (strain R).